The chain runs to 516 residues: MGSIDNLTAQKLTSSQFPMNTLEPEEFRRQGHLMIDFLADYYRKVENYPVRSQVSPGYLREILPESAPYNPESLETILQDVQTKIIPGITHWQSPNFFAYFPSSGSTAGFLGEMLSTGFNVVGFNWMVSPAATELENVVTDWFGKMLQLPKSFLFSGGGGGVLQGTTCEAILCTLVAARDKNLRQHGMDNIGKLVVYCSDQTHSALQKAAKIAGIDPKNFRAIETTKSSNFKLCPKRLESAILYDLQNGLIPLYLCATVGTTSSTTVDPLPALTEVAKKYDLWVHVDAAYAGSACICPEFRQYLDGVENADSFSLNAHKWFLTTLDCCCLWVRDPSALIKSLSTYPEFLKNNASETNKVVDYKDWQIMLSRRFRALKLWFVLRSYGVGQLREFIRGHVGMAKYFEGLVGLDKRFEVVAPRLFSMVCFRIKPSAMIGKNDENEVNEINRKLLESVNDSGRIYVSHTVLGGIYVIRFAIGGTLTDINHVSAAWKVLQDHADALLDDAFLPKKIVNILS.

Lysine 319 is modified (N6-(pyridoxal phosphate)lysine).

This sequence belongs to the group II decarboxylase family. Homodimer. It depends on pyridoxal 5'-phosphate as a cofactor.

It carries out the reaction L-tyrosine + H(+) = tyramine + CO2. The protein is Tyrosine decarboxylase 3 (TYRDC-3) of Petroselinum crispum (Parsley).